A 334-amino-acid chain; its full sequence is Ornithine carbamoyltransferase (334 aa).

Carbamoyl phosphate-binding positions include 57-60, glutamine 84, arginine 108, and 135-138; these read STRT and HPTQ. L-ornithine contacts are provided by residues asparagine 169, aspartate 233, and 237–238; that span reads SM. Carbamoyl phosphate-binding positions include 275-276 and arginine 320; that span reads CL.

It belongs to the aspartate/ornithine carbamoyltransferase superfamily. OTCase family.

The protein localises to the cytoplasm. The catalysed reaction is carbamoyl phosphate + L-ornithine = L-citrulline + phosphate + H(+). The protein operates within amino-acid biosynthesis; L-arginine biosynthesis; L-arginine from L-ornithine and carbamoyl phosphate: step 1/3. In terms of biological role, reversibly catalyzes the transfer of the carbamoyl group from carbamoyl phosphate (CP) to the N(epsilon) atom of ornithine (ORN) to produce L-citrulline. This chain is Ornithine carbamoyltransferase, found in Vibrio campbellii (strain ATCC BAA-1116).